The sequence spans 356 residues: Molybdenum import ATP-binding protein ModC (356 aa).

The ABC transporter domain occupies 1–232 (MEDIHARFHI…LDLPIRLGED (232 aa)). An ATP-binding site is contributed by 33 to 40 (GHSGSGKT). One can recognise a Mop domain in the interval 291 to 356 (ETSVLNLLRG…VQVKSVALME (66 aa)).

It belongs to the ABC transporter superfamily. Molybdate importer (TC 3.A.1.8) family. In terms of assembly, the complex is composed of two ATP-binding proteins (ModC), two transmembrane proteins (ModB) and a solute-binding protein (ModA).

The protein localises to the cell inner membrane. It carries out the reaction molybdate(out) + ATP + H2O = molybdate(in) + ADP + phosphate + H(+). Functionally, part of the ABC transporter complex ModABC involved in molybdenum import. Responsible for energy coupling to the transport system. In Methylococcus capsulatus (strain ATCC 33009 / NCIMB 11132 / Bath), this protein is Molybdenum import ATP-binding protein ModC.